A 258-amino-acid polypeptide reads, in one-letter code: Probable parvulin-type peptidyl-prolyl cis-trans isomerase (258 aa).

The signal sequence occupies residues 1–19 (MKRIAMLAAACVIAVPAFA). Positions 127–219 (KMEYKVRHIL…FGWHVIQVDD (93 aa)) constitute a PpiC domain. Over residues 158 to 175 (DDLAKKNSKDPGSAERGG) the composition is skewed to basic and acidic residues. Residues 158–178 (DDLAKKNSKDPGSAERGGDLG) form a disordered region.

Belongs to the PpiC/parvulin rotamase family.

It carries out the reaction [protein]-peptidylproline (omega=180) = [protein]-peptidylproline (omega=0). The chain is Probable parvulin-type peptidyl-prolyl cis-trans isomerase from Bordetella bronchiseptica (strain ATCC BAA-588 / NCTC 13252 / RB50) (Alcaligenes bronchisepticus).